The chain runs to 179 residues: Guanosine-3',5'-bis(diphosphate) 3'-pyrophosphohydrolase MESH1 (179 aa).

The HD domain maps to 32-127 (YINHPLGVAR…VKLADKLYNL (96 aa)). Mn(2+)-binding residues include His-35, His-61, and Asp-62. Active-site nucleophile residues include Glu-65 and Asp-66. Asp-122 serves as a coordination point for Mn(2+).

Belongs to the MESH1 family. Requires Mn(2+) as cofactor.

The catalysed reaction is guanosine 3',5'-bis(diphosphate) + H2O = GDP + diphosphate + H(+). Functionally, ppGpp hydrolyzing enzyme involved in starvation response. In Xenopus tropicalis (Western clawed frog), this protein is Guanosine-3',5'-bis(diphosphate) 3'-pyrophosphohydrolase MESH1 (hddc3).